The primary structure comprises 252 residues: Imidazole glycerol phosphate synthase subunit HisF (252 aa).

Catalysis depends on residues aspartate 11 and aspartate 130.

It belongs to the HisA/HisF family. As to quaternary structure, heterodimer of HisH and HisF.

It localises to the cytoplasm. The catalysed reaction is 5-[(5-phospho-1-deoxy-D-ribulos-1-ylimino)methylamino]-1-(5-phospho-beta-D-ribosyl)imidazole-4-carboxamide + L-glutamine = D-erythro-1-(imidazol-4-yl)glycerol 3-phosphate + 5-amino-1-(5-phospho-beta-D-ribosyl)imidazole-4-carboxamide + L-glutamate + H(+). It participates in amino-acid biosynthesis; L-histidine biosynthesis; L-histidine from 5-phospho-alpha-D-ribose 1-diphosphate: step 5/9. Its function is as follows. IGPS catalyzes the conversion of PRFAR and glutamine to IGP, AICAR and glutamate. The HisF subunit catalyzes the cyclization activity that produces IGP and AICAR from PRFAR using the ammonia provided by the HisH subunit. The chain is Imidazole glycerol phosphate synthase subunit HisF from Staphylococcus saprophyticus subsp. saprophyticus (strain ATCC 15305 / DSM 20229 / NCIMB 8711 / NCTC 7292 / S-41).